The sequence spans 475 residues: tRNA (guanine(37)-N(1))-methyltransferase (475 aa).

S-adenosyl-L-methionine-binding positions include histidine 219, 258–259 (DL), and 286–287 (DG). Positions 306–328 (KITKQKPTSNDKKRNRKVESPTV) are disordered. Asparagine 349 is an S-adenosyl-L-methionine binding site. Residues 456-469 (NLVSQSDVSKSSDN) are compositionally biased toward polar residues. The tract at residues 456–475 (NLVSQSDVSKSSDNILEKDT) is disordered.

It belongs to the class I-like SAM-binding methyltransferase superfamily. TRM5/TYW2 family. In terms of assembly, monomer.

The protein resides in the mitochondrion matrix. It is found in the nucleus. It localises to the cytoplasm. The catalysed reaction is guanosine(37) in tRNA + S-adenosyl-L-methionine = N(1)-methylguanosine(37) in tRNA + S-adenosyl-L-homocysteine + H(+). Specifically methylates the N1 position of guanosine-37 in various cytoplasmic and mitochondrial tRNAs. Methylation is not dependent on the nature of the nucleoside 5' of the target nucleoside. This is the first step in the biosynthesis of wybutosine (yW), a modified base adjacent to the anticodon of tRNAs and required for accurate decoding. In Batrachochytrium dendrobatidis (strain JAM81 / FGSC 10211) (Frog chytrid fungus), this protein is tRNA (guanine(37)-N(1))-methyltransferase.